The chain runs to 160 residues: Leptin (160 aa).

The N-terminal stretch at Met1 to Cys17 is a signal peptide. Cys109 and Cys160 form a disulfide bridge.

It belongs to the leptin family.

The protein resides in the secreted. Its function is as follows. May function as part of a signaling pathway that acts to regulate the size of the body fat depot. This chain is Leptin (lep), found in Tetraodon nigroviridis (Spotted green pufferfish).